A 296-amino-acid chain; its full sequence is MPYDSVYSEKRPPGTLRTAWRKFYSDAPAMVGLYGCAGLALLCIFGGWIAPYGIDQQFLGYQLLPPSWSRYGEVSFFLGTDDLGRDVLSRLLSGAAPTVGGAFIVTLAATLCGLVLGVVAGATHGLRSAVLNHILDTLLSIPSLLLAIIVVAFAGPHLSHAMFAVWLALLPRMVRSVYSMVHDELEKEYVIAARLDGATTLNILWFAILPNITAGLVTEITRALSMAILDIAALGFLDLGAQLPSPEWGAMLGDALELIYVAPWTVMLPGAAITLSVLLVNLLGDGIRRAIIAGVE.

Over 1-28 (MPYDSVYSEKRPPGTLRTAWRKFYSDAP) the chain is Cytoplasmic. Residues 29–49 (AMVGLYGCAGLALLCIFGGWI) form a helical membrane-spanning segment. The Periplasmic segment spans residues 50–98 (APYGIDQQFLGYQLLPPSWSRYGEVSFFLGTDDLGRDVLSRLLSGAAPT). Residues 99–119 (VGGAFIVTLAATLCGLVLGVV) form a helical membrane-spanning segment. Residues 99–284 (VGGAFIVTLA…LSVLLVNLLG (186 aa)) form the ABC transmembrane type-1 domain. Topologically, residues 120–133 (AGATHGLRSAVLNH) are cytoplasmic. A helical transmembrane segment spans residues 134–154 (ILDTLLSIPSLLLAIIVVAFA). The Periplasmic portion of the chain corresponds to 155 to 196 (GPHLSHAMFAVWLALLPRMVRSVYSMVHDELEKEYVIAARLD). A helical membrane pass occupies residues 197-217 (GATTLNILWFAILPNITAGLV). The Cytoplasmic portion of the chain corresponds to 218–222 (TEITR). A helical transmembrane segment spans residues 223-243 (ALSMAILDIAALGFLDLGAQL). Residues 244–257 (PSPEWGAMLGDALE) lie on the Periplasmic side of the membrane. Residues 258–278 (LIYVAPWTVMLPGAAITLSVL) form a helical membrane-spanning segment. Residues 279 to 296 (LVNLLGDGIRRAIIAGVE) are Cytoplasmic-facing.

This sequence belongs to the binding-protein-dependent transport system permease family. OppBC subfamily.

It is found in the cell inner membrane. Functionally, involved in a peptide intake transport system that plays a role in the resistance to antimicrobial peptides. This chain is Peptide transport system permease protein SapC (sapC), found in Salmonella typhi.